We begin with the raw amino-acid sequence, 230 residues long: Cytochrome c oxidase subunit 2 (230 aa).

The Mitochondrial intermembrane segment spans residues 1–14 (MAHPSQLGFQDAAS). The helical transmembrane segment at 15–45 (PVMEELLHFHDHALMIVLLISTLVLYIIVAM) threads the bilayer. At 46–59 (VSTKLTNMYILDSQ) the chain is on the mitochondrial matrix side. The helical transmembrane segment at 60-87 (EIEIVWTVLPAVILILIALPSLRILYLM) threads the bilayer. At 88–230 (DEINDPHLTI…KWSTMMLEDA (143 aa)) the chain is on the mitochondrial intermembrane side. Cu cation-binding residues include histidine 161, cysteine 196, glutamate 198, cysteine 200, histidine 204, and methionine 207. Mg(2+) is bound at residue glutamate 198.

The protein belongs to the cytochrome c oxidase subunit 2 family. Component of the cytochrome c oxidase (complex IV, CIV), a multisubunit enzyme composed of 14 subunits. The complex is composed of a catalytic core of 3 subunits MT-CO1, MT-CO2 and MT-CO3, encoded in the mitochondrial DNA, and 11 supernumerary subunits COX4I, COX5A, COX5B, COX6A, COX6B, COX6C, COX7A, COX7B, COX7C, COX8 and NDUFA4, which are encoded in the nuclear genome. The complex exists as a monomer or a dimer and forms supercomplexes (SCs) in the inner mitochondrial membrane with NADH-ubiquinone oxidoreductase (complex I, CI) and ubiquinol-cytochrome c oxidoreductase (cytochrome b-c1 complex, complex III, CIII), resulting in different assemblies (supercomplex SCI(1)III(2)IV(1) and megacomplex MCI(2)III(2)IV(2)). Found in a complex with TMEM177, COA6, COX18, COX20, SCO1 and SCO2. Interacts with TMEM177 in a COX20-dependent manner. Interacts with COX20. Interacts with COX16. It depends on Cu cation as a cofactor.

It is found in the mitochondrion inner membrane. It carries out the reaction 4 Fe(II)-[cytochrome c] + O2 + 8 H(+)(in) = 4 Fe(III)-[cytochrome c] + 2 H2O + 4 H(+)(out). Its function is as follows. Component of the cytochrome c oxidase, the last enzyme in the mitochondrial electron transport chain which drives oxidative phosphorylation. The respiratory chain contains 3 multisubunit complexes succinate dehydrogenase (complex II, CII), ubiquinol-cytochrome c oxidoreductase (cytochrome b-c1 complex, complex III, CIII) and cytochrome c oxidase (complex IV, CIV), that cooperate to transfer electrons derived from NADH and succinate to molecular oxygen, creating an electrochemical gradient over the inner membrane that drives transmembrane transport and the ATP synthase. Cytochrome c oxidase is the component of the respiratory chain that catalyzes the reduction of oxygen to water. Electrons originating from reduced cytochrome c in the intermembrane space (IMS) are transferred via the dinuclear copper A center (CU(A)) of subunit 2 and heme A of subunit 1 to the active site in subunit 1, a binuclear center (BNC) formed by heme A3 and copper B (CU(B)). The BNC reduces molecular oxygen to 2 water molecules using 4 electrons from cytochrome c in the IMS and 4 protons from the mitochondrial matrix. The protein is Cytochrome c oxidase subunit 2 (mt-co2) of Oncorhynchus mykiss (Rainbow trout).